The following is a 199-amino-acid chain: Protein ASYMMETRIC LEAVES 2 (199 aa).

The LOB domain maps to 8–109; that stretch reads SPCAACKFLR…IDLSCAKSEL (102 aa).

This sequence belongs to the LOB domain-containing protein family. In terms of assembly, homo- and heterodimer with AS1. Interacts with AS1. Part of the AS1 repressor complex composed of AS1, LBD6/AS2 and HDA6. Interacts with LFR. Expressed in young shoots, roots, stems, leaves, flowers and adaxial domains of cotyledonary and leaves primordia.

It is found in the nucleus. Negative regulator of cell proliferation in the adaxial side of leaves. Regulates the formation of a symmetric lamina and the establishment of venation. Positively regulates LATERAL ORGAN BOUNDARIES (LOB) within the shoot apex, and the class III HD-ZIP genes REV, PHB, and PHV. Interacts directly with ASYMMETRIC LEAVES 1 (AS1) to repress the knox homeobox genes KNAT1, KNAT2, and KNAT6 and the abaxial determinants ARF3, KAN2 and YAB5. May act in parallel with the RDR6-SGS3-AGO7 pathway, an endogenous RNA silencing pathway, to regulate the leaf morphogenesis. Required for the binding of AS1 to the KNOX genes. Involved in leaf polarity establishment by functioning cooperatively with RH10 or RID2 to repress abaxial genes ARF3, ARF4, KAN1, KAN2, YAB1 and YAB5, and the knox homeobox genes KNAT1, KNAT2, KNAT6, and STM to promote adaxial development in leaf primordia at shoot apical meristems at high temperatures. The sequence is that of Protein ASYMMETRIC LEAVES 2 from Arabidopsis thaliana (Mouse-ear cress).